The following is a 216-amino-acid chain: Phosphoenolpyruvate guanylyltransferase (216 aa).

Phosphoenolpyruvate-binding residues include Thr-139, Gly-155, and Ser-158.

This sequence belongs to the CofC family.

The catalysed reaction is phosphoenolpyruvate + GTP + H(+) = enolpyruvoyl-2-diphospho-5'-guanosine + diphosphate. Its pathway is cofactor biosynthesis; coenzyme F420 biosynthesis. In terms of biological role, guanylyltransferase that catalyzes the activation of phosphoenolpyruvate (PEP) as enolpyruvoyl-2-diphospho-5'-guanosine, via the condensation of PEP with GTP. It is involved in the biosynthesis of coenzyme F420, a hydride carrier cofactor. The chain is Phosphoenolpyruvate guanylyltransferase from Streptomyces avermitilis (strain ATCC 31267 / DSM 46492 / JCM 5070 / NBRC 14893 / NCIMB 12804 / NRRL 8165 / MA-4680).